We begin with the raw amino-acid sequence, 121 residues long: Small ribosomal subunit protein uS13 (121 aa).

The disordered stretch occupies residues 97 to 121; sequence VRGQRTRTNARTRRGARKTVAGKKK. Basic residues predominate over residues 100–121; the sequence is QRTRTNARTRRGARKTVAGKKK.

Belongs to the universal ribosomal protein uS13 family. As to quaternary structure, part of the 30S ribosomal subunit. Forms a loose heterodimer with protein S19. Forms two bridges to the 50S subunit in the 70S ribosome.

In terms of biological role, located at the top of the head of the 30S subunit, it contacts several helices of the 16S rRNA. In the 70S ribosome it contacts the 23S rRNA (bridge B1a) and protein L5 of the 50S subunit (bridge B1b), connecting the 2 subunits; these bridges are implicated in subunit movement. Contacts the tRNAs in the A and P-sites. In Synechococcus sp. (strain CC9605), this protein is Small ribosomal subunit protein uS13.